Here is a 274-residue protein sequence, read N- to C-terminus: NH(3)-dependent NAD(+) synthetase (274 aa).

46–53 provides a ligand contact to ATP; it reads GISGGQDS. D52 is a Mg(2+) binding site. R140 provides a ligand contact to deamido-NAD(+). ATP is bound at residue T160. E165 is a binding site for Mg(2+). Deamido-NAD(+)-binding residues include K173 and D180. K189 and T211 together coordinate ATP. 260–261 serves as a coordination point for deamido-NAD(+); that stretch reads HK.

Belongs to the NAD synthetase family. As to quaternary structure, homodimer.

It carries out the reaction deamido-NAD(+) + NH4(+) + ATP = AMP + diphosphate + NAD(+) + H(+). It participates in cofactor biosynthesis; NAD(+) biosynthesis; NAD(+) from deamido-NAD(+) (ammonia route): step 1/1. Its function is as follows. Catalyzes the ATP-dependent amidation of deamido-NAD to form NAD. Uses ammonia as a nitrogen source. The protein is NH(3)-dependent NAD(+) synthetase of Streptococcus uberis (strain ATCC BAA-854 / 0140J).